The sequence spans 566 residues: E3 ubiquitin-protein ligase RNF220 (566 aa).

Residue lysine 277 forms a Glycyl lysine isopeptide (Lys-Gly) (interchain with G-Cter in SUMO2) linkage. The tract at residues 277-297 (KREGESPTASPHSSATDDLHH) is disordered. At serine 390 the chain carries Phosphoserine. The stretch at 485-513 (EDSAVTTFEALKARVRELERQLSRGDRYK) forms a coiled coil. Residues 514 to 522 (CLICMDSYS) are required for targeting to the cytoplasm. An RING-type zinc finger spans residues 514–553 (CLICMDSYSMPLTSIQCWHVHCEECWLRTLGAKKLCPQCN).

As to quaternary structure, interacts with SIN3B. Interacts with CTNNB1 (via Armadillo repeats 2-8). Interacts with USP7 (via MATH domain). In terms of processing, auto-ubiquitinated; leads to proteasomal degradation. As to expression, ubiquitously expressed. Abundant in brain and spinal cord, particularly in the cerebellum and cerebral cortex. In fetal tissues expressed in the cerebellum, spinal cord and cortex.

The protein resides in the cytoplasm. The protein localises to the nucleus. It carries out the reaction S-ubiquitinyl-[E2 ubiquitin-conjugating enzyme]-L-cysteine + [acceptor protein]-L-lysine = [E2 ubiquitin-conjugating enzyme]-L-cysteine + N(6)-ubiquitinyl-[acceptor protein]-L-lysine.. It participates in protein modification; protein ubiquitination. Its function is as follows. E3 ubiquitin-protein ligase that promotes the ubiquitination and proteasomal degradation of SIN3B. Independently of its E3 ligase activity, acts as a CTNNB1 stabilizer through USP7-mediated deubiquitination of CTNNB1 promoting Wnt signaling. Plays a critical role in the regulation of nuclear lamina. This Homo sapiens (Human) protein is E3 ubiquitin-protein ligase RNF220 (RNF220).